A 375-amino-acid chain; its full sequence is CLIP domain-containing serine protease B14 (375 aa).

The N-terminal stretch at 1–24 (MYSRRYVACGLLCLLVIAIDQGHG) is a signal peptide. The Clip domain maps to 29–83 (PCTTPNGTAGRCVRVRECGYVLDLLRKDLFAHSDTVHLEGLQCGTRPDGGALVCC). 3 cysteine pairs are disulfide-bonded: Cys30-Cys82, Cys40-Cys71, and Cys46-Cys83. Asn34 carries an N-linked (GlcNAc...) asparagine glycan. The region spanning 101 to 370 (IIGGNDTELG…YMGWLEREMF (270 aa)) is the Peptidase S1 domain. Asn105 carries an N-linked (GlcNAc...) asparagine glycan. Cysteines 131 and 147 form a disulfide. Active-site charge relay system residues include His146 and Asp213. N-linked (GlcNAc...) asparagine glycosylation is present at Asn238. Disulfide bonds link Cys289/Cys307 and Cys317/Cys346. Residue Ser321 is the Charge relay system of the active site. N-linked (GlcNAc...) asparagine glycosylation is present at Asn357.

Belongs to the peptidase S1 family. CLIP subfamily. Post-translationally, N-glycosylated. In terms of processing, proteolytically cleaved. In terms of tissue distribution, expressed by a subpopulation of hemocytes.

The protein resides in the secreted. Its function is as follows. Serine protease. Plays a role in innate immunity against infections by parasite P.berghei and by Gram-negative bacteria such as E.coli. In response to P.berghei infection, contributes to the clearing of parasite ookinetes independent of melanization, an innate immune response which consists in the deposition of melanin pigments on invading pathogens and parasites. May play a role in non-septic wound healing. The sequence is that of CLIP domain-containing serine protease B14 from Anopheles gambiae (African malaria mosquito).